The primary structure comprises 221 residues: GTP cyclohydrolase III (221 aa).

Belongs to the archaeal-type GTP cyclohydrolase family.

It carries out the reaction GTP + 3 H2O = 2-amino-5-formylamino-6-(5-phospho-D-ribosylamino)pyrimidin-4(3H)-one + 2 phosphate + 2 H(+). Functionally, catalyzes the formation of 2-amino-5-formylamino-6-ribofuranosylamino-4(3H)-pyrimidinone ribonucleotide monophosphate and inorganic phosphate from GTP. Also has an independent pyrophosphate phosphohydrolase activity. The polypeptide is GTP cyclohydrolase III (Pyrobaculum aerophilum (strain ATCC 51768 / DSM 7523 / JCM 9630 / CIP 104966 / NBRC 100827 / IM2)).